We begin with the raw amino-acid sequence, 425 residues long: Serine--tRNA ligase (425 aa).

Residue 233–235 (TAE) coordinates L-serine. 264 to 266 (RRE) lines the ATP pocket. E287 contacts L-serine. 351-354 (EISS) is a binding site for ATP. An L-serine-binding site is contributed by S387.

This sequence belongs to the class-II aminoacyl-tRNA synthetase family. Type-1 seryl-tRNA synthetase subfamily. As to quaternary structure, homodimer. The tRNA molecule binds across the dimer.

The protein localises to the cytoplasm. The enzyme catalyses tRNA(Ser) + L-serine + ATP = L-seryl-tRNA(Ser) + AMP + diphosphate + H(+). It catalyses the reaction tRNA(Sec) + L-serine + ATP = L-seryl-tRNA(Sec) + AMP + diphosphate + H(+). It functions in the pathway aminoacyl-tRNA biosynthesis; selenocysteinyl-tRNA(Sec) biosynthesis; L-seryl-tRNA(Sec) from L-serine and tRNA(Sec): step 1/1. Catalyzes the attachment of serine to tRNA(Ser). Is also able to aminoacylate tRNA(Sec) with serine, to form the misacylated tRNA L-seryl-tRNA(Sec), which will be further converted into selenocysteinyl-tRNA(Sec). The chain is Serine--tRNA ligase from Thermotoga maritima (strain ATCC 43589 / DSM 3109 / JCM 10099 / NBRC 100826 / MSB8).